The following is a 75-amino-acid chain: Beta-defensin 30 (75 aa).

The N-terminal stretch at 1–22 (MGSLQLTLVLFVLLSYVPPVRS) is a signal peptide. 3 disulfides stabilise this stretch: Cys35/Cys62, Cys42/Cys56, and Cys46/Cys63.

It belongs to the beta-defensin family.

It is found in the secreted. Functionally, has antibacterial activity. The sequence is that of Beta-defensin 30 (Defb30) from Mus musculus (Mouse).